The sequence spans 324 residues: MKFDRHRRLRSSKTMRDLVRETHVRKEDLIYPIFVVEQDDIKSEIKSLPGIYQISLNLLHEEIKEAYDLGIRAIMFFGVPNDKDDIGSGAYDHNGVVQEATRISKNLYKDLLIVADTCLCEYTDHGHCGVIDDHTHDVDNDKSLPLLVKTAISQVEAGADIIAPSNMMDGFVAEIREGLDQAGYQNIPIMSYGIKYASSFFGPFRDAADSAPSFGDRKTYQMDPANRLEALRELESDLKEGCDMMIVKPSLSYLDIIRDVKNNTNVPVVAYNVSGEYSMTKAAALNGWIDEEKIVMEQMISMKRAGADLIITYFAKDICRYLDK.

Zn(2+)-binding residues include Cys118, Cys120, and Cys128. Lys195 acts as the Schiff-base intermediate with substrate in catalysis. 2 residues coordinate 5-aminolevulinate: Arg205 and Arg217. Glu233 contributes to the Mg(2+) binding site. Catalysis depends on Lys248, which acts as the Schiff-base intermediate with substrate. Residues Ser274 and Tyr313 each coordinate 5-aminolevulinate.

The protein belongs to the ALAD family. Homooctamer. Requires Zn(2+) as cofactor.

It catalyses the reaction 2 5-aminolevulinate = porphobilinogen + 2 H2O + H(+). It participates in porphyrin-containing compound metabolism; protoporphyrin-IX biosynthesis; coproporphyrinogen-III from 5-aminolevulinate: step 1/4. In terms of biological role, catalyzes an early step in the biosynthesis of tetrapyrroles. Binds two molecules of 5-aminolevulinate per subunit, each at a distinct site, and catalyzes their condensation to form porphobilinogen. The polypeptide is Delta-aminolevulinic acid dehydratase (hemB) (Staphylococcus epidermidis (strain ATCC 12228 / FDA PCI 1200)).